The sequence spans 394 residues: 8-amino-7-oxononanoate synthase (394 aa).

Arg21 contacts substrate. Gly112–Tyr113 serves as a coordination point for pyridoxal 5'-phosphate. Residue His137 coordinates substrate. 3 residues coordinate pyridoxal 5'-phosphate: Ser183, His211, and Thr239. Lys242 is modified (N6-(pyridoxal phosphate)lysine). Thr358 is a binding site for substrate.

Belongs to the class-II pyridoxal-phosphate-dependent aminotransferase family. BioF subfamily. Homodimer. Pyridoxal 5'-phosphate is required as a cofactor.

The enzyme catalyses 6-carboxyhexanoyl-[ACP] + L-alanine + H(+) = (8S)-8-amino-7-oxononanoate + holo-[ACP] + CO2. The protein operates within cofactor biosynthesis; biotin biosynthesis. In terms of biological role, catalyzes the decarboxylative condensation of pimeloyl-[acyl-carrier protein] and L-alanine to produce 8-amino-7-oxononanoate (AON), [acyl-carrier protein], and carbon dioxide. In Paraburkholderia xenovorans (strain LB400), this protein is 8-amino-7-oxononanoate synthase.